The following is a 481-amino-acid chain: Arf-GAP domain and FG repeat-containing protein 2 (481 aa).

An Arf-GAP domain is found at 27–153; it reads EVWCRRVREL…WYVPPDQVKG (127 aa). Residues 47–70 form a C4-type zinc finger; that stretch reads CFECAQRGVTYVDITVGSFVCTTC. 3 disordered regions span residues 150-220, 271-309, and 431-481; these read QVKG…SVKK, SSVF…APAS, and QQNG…NPFL. Over residues 157–166 the composition is skewed to polar residues; it reads TKGSASTPVQ. Lysine 173 is subject to N6-acetyllysine. Composition is skewed to polar residues over residues 188-210, 283-298, and 454-481; these read VAAS…ARST, ASFQ…SQGT, and AGIS…NPFL.

In terms of assembly, interacts with EPS15R.

This Homo sapiens (Human) protein is Arf-GAP domain and FG repeat-containing protein 2 (AGFG2).